We begin with the raw amino-acid sequence, 387 residues long: Oleoyl-12-hydroxylase FAH12 (387 aa).

A disordered region spans residues 1–34 (MGGGGRMSTVITSNNSEKKGGSSHLKRAPHTKPP). 2 helical membrane passes run 61-81 (AYDV…FPYI) and 88-108 (VAWL…WVIG). The short motif at 109-113 (HECGH) is the Histidine box-1 element. The chain crosses the membrane as a helical span at residues 121–141 (LADDIVGLIVHSALLVPYFSW). The short motif at 145-149 (HRRHH) is the Histidine box-2 element. 3 consecutive transmembrane segments (helical) span residues 183-203 (VLTL…FNVS), 229-249 (IYIA…ATMA), and 253-273 (AWVM…LVMI). The short motif at 319–323 (HVAHH) is the Histidine box-3 element.

The protein belongs to the fatty acid desaturase type 1 family. In terms of tissue distribution, expressed in seeds. Barely detected in leaves.

The protein resides in the microsome membrane. The catalysed reaction is a 1-acyl-2-(9Z)-octadecenoyl-sn-glycero-3-phosphocholine + 2 Fe(II)-[cytochrome b5] + O2 + 2 H(+) = a 1-acyl-2-[(R)-12-hydroxyoleoyl]-sn-glycero-3-phosphocholine + 2 Fe(III)-[cytochrome b5] + H2O. It functions in the pathway lipid metabolism; monounsaturated fatty acid biosynthesis. Inhibited by oleoyloxyethyl phosphocholine. Oleoyl-12-hydroxylase involved in the biosynthesis of ricinoleate (12-hydroxy-cis-9-octadecenoate), the major fatty acid constituent of the oil seeds from castor bean plants. Catalyzes the hydroxylation at the 12-position of 1-acyl-2-oleoyl-sn-glycero-3-phosphocholine (2-oleoyl-PC), which seems to be the actual physiological subtrate. It uses cytochrome b5 as an electron donor. May also be involved in the production of lesquerolic acid (14-hydroxyeicos-cis-ll-enoic acid) in vitro. The polypeptide is Oleoyl-12-hydroxylase FAH12 (Ricinus communis (Castor bean)).